The chain runs to 225 residues: UPF0758 protein Bpet3149 (225 aa).

One can recognise an MPN domain in the interval 103-225 (AMSEPGSVKR…VVSMAELGLL (123 aa)). Residues His174, His176, and Asp187 each coordinate Zn(2+). Positions 174–187 (HNHPSGSAQPSQAD) match the JAMM motif motif.

Belongs to the UPF0758 family.

The chain is UPF0758 protein Bpet3149 from Bordetella petrii (strain ATCC BAA-461 / DSM 12804 / CCUG 43448).